The sequence spans 77 residues: Large ribosomal subunit protein uL24 (77 aa).

The protein belongs to the universal ribosomal protein uL24 family. As to quaternary structure, part of the 50S ribosomal subunit.

In terms of biological role, one of two assembly initiator proteins, it binds directly to the 5'-end of the 23S rRNA, where it nucleates assembly of the 50S subunit. Functionally, one of the proteins that surrounds the polypeptide exit tunnel on the outside of the subunit. The sequence is that of Large ribosomal subunit protein uL24 from Campylobacter fetus subsp. fetus (strain 82-40).